A 447-amino-acid chain; its full sequence is Cobyrinate a,c-diamide synthase (447 aa).

The region spanning Arg247–Gln435 is the GATase cobBQ-type domain. Cys329 (nucleophile) is an active-site residue.

It belongs to the CobB/CbiA family. It depends on Mg(2+) as a cofactor.

It catalyses the reaction cob(II)yrinate + 2 L-glutamine + 2 ATP + 2 H2O = cob(II)yrinate a,c diamide + 2 L-glutamate + 2 ADP + 2 phosphate + 2 H(+). It carries out the reaction Ni-sirohydrochlorin + 2 L-glutamine + 2 ATP + 2 H2O = Ni-sirohydrochlorin a,c-diamide + 2 L-glutamate + 2 ADP + 2 phosphate + 2 H(+). Its pathway is cofactor biosynthesis; adenosylcobalamin biosynthesis; cob(II)yrinate a,c-diamide from sirohydrochlorin (anaerobic route): step 10/10. Its function is as follows. Catalyzes the ATP-dependent amidation of the two carboxylate groups at positions a and c of cobyrinate, using either L-glutamine or ammonia as the nitrogen source. Involved in the biosynthesis of the unique nickel-containing tetrapyrrole coenzyme F430, the prosthetic group of methyl-coenzyme M reductase (MCR), which plays a key role in methanogenesis and anaerobic methane oxidation. Catalyzes the ATP-dependent amidation of the two carboxylate groups at positions a and c of Ni-sirohydrochlorin, using L-glutamine or ammonia as the nitrogen source. The polypeptide is Cobyrinate a,c-diamide synthase (Methanothermobacter thermautotrophicus (strain ATCC 29096 / DSM 1053 / JCM 10044 / NBRC 100330 / Delta H) (Methanobacterium thermoautotrophicum)).